The following is a 281-amino-acid chain: NAD kinase (281 aa).

The active-site Proton acceptor is Asp-61. NAD(+) contacts are provided by residues Asp-61–Gly-62, Asn-134–Asp-135, Arg-145, Asp-164, Thr-175–Ser-180, and Gln-234.

This sequence belongs to the NAD kinase family. A divalent metal cation serves as cofactor.

It is found in the cytoplasm. It catalyses the reaction NAD(+) + ATP = ADP + NADP(+) + H(+). Its function is as follows. Involved in the regulation of the intracellular balance of NAD and NADP, and is a key enzyme in the biosynthesis of NADP. Catalyzes specifically the phosphorylation on 2'-hydroxyl of the adenosine moiety of NAD to yield NADP. In Clostridium botulinum (strain Kyoto / Type A2), this protein is NAD kinase.